The chain runs to 1337 residues: ATP-dependent helicase/nuclease subunit A (1337 aa).

The UvrD-like helicase ATP-binding domain maps to Phe-3 to Arg-484. Position 24–31 (Ala-24–Thr-31) interacts with ATP. The region spanning Ala-522 to Gly-867 is the UvrD-like helicase C-terminal domain.

It belongs to the helicase family. AddA subfamily. As to quaternary structure, heterodimer of AddA and AddB/RexB. Mg(2+) is required as a cofactor.

The enzyme catalyses Couples ATP hydrolysis with the unwinding of duplex DNA by translocating in the 3'-5' direction.. The catalysed reaction is ATP + H2O = ADP + phosphate + H(+). In terms of biological role, the heterodimer acts as both an ATP-dependent DNA helicase and an ATP-dependent, dual-direction single-stranded exonuclease. Recognizes the chi site generating a DNA molecule suitable for the initiation of homologous recombination. The AddA nuclease domain is required for chi fragment generation; this subunit has the helicase and 3' -&gt; 5' nuclease activities. This is ATP-dependent helicase/nuclease subunit A from Limosilactobacillus fermentum (strain NBRC 3956 / LMG 18251) (Lactobacillus fermentum).